The following is a 292-amino-acid chain: Lipoyl synthase (292 aa).

[4Fe-4S] cluster is bound by residues Cys38, Cys43, Cys49, Cys64, Cys68, Cys71, and Ser277. The Radical SAM core domain occupies 50–266; sequence WSKGTATFML…KNRAESLGFR (217 aa).

This sequence belongs to the radical SAM superfamily. Lipoyl synthase family. [4Fe-4S] cluster serves as cofactor.

The protein localises to the cytoplasm. It carries out the reaction [[Fe-S] cluster scaffold protein carrying a second [4Fe-4S](2+) cluster] + N(6)-octanoyl-L-lysyl-[protein] + 2 oxidized [2Fe-2S]-[ferredoxin] + 2 S-adenosyl-L-methionine + 4 H(+) = [[Fe-S] cluster scaffold protein] + N(6)-[(R)-dihydrolipoyl]-L-lysyl-[protein] + 4 Fe(3+) + 2 hydrogen sulfide + 2 5'-deoxyadenosine + 2 L-methionine + 2 reduced [2Fe-2S]-[ferredoxin]. It functions in the pathway protein modification; protein lipoylation via endogenous pathway; protein N(6)-(lipoyl)lysine from octanoyl-[acyl-carrier-protein]: step 2/2. Its function is as follows. Catalyzes the radical-mediated insertion of two sulfur atoms into the C-6 and C-8 positions of the octanoyl moiety bound to the lipoyl domains of lipoate-dependent enzymes, thereby converting the octanoylated domains into lipoylated derivatives. This is Lipoyl synthase from Chlorobium limicola (strain DSM 245 / NBRC 103803 / 6330).